Reading from the N-terminus, the 338-residue chain is Protein-glutamate methylesterase/protein-glutamine glutaminase 2 (338 aa).

The Response regulatory domain occupies 2–119; it reads RIGIVNDSAL…SDTKLAAGPL (118 aa). The residue at position 53 (aspartate 53) is a 4-aspartylphosphate. In terms of domain architecture, CheB-type methylesterase spans 145–330; the sequence is PTPTAPRLVA…PLQKIAPRLV (186 aa). Active-site residues include serine 158, histidine 185, and aspartate 278.

This sequence belongs to the CheB family. Post-translationally, phosphorylated by CheA. Phosphorylation of the N-terminal regulatory domain activates the methylesterase activity.

The protein resides in the cytoplasm. It catalyses the reaction [protein]-L-glutamate 5-O-methyl ester + H2O = L-glutamyl-[protein] + methanol + H(+). The catalysed reaction is L-glutaminyl-[protein] + H2O = L-glutamyl-[protein] + NH4(+). Its function is as follows. Involved in chemotaxis. Part of a chemotaxis signal transduction system that modulates chemotaxis in response to various stimuli. Catalyzes the demethylation of specific methylglutamate residues introduced into the chemoreceptors (methyl-accepting chemotaxis proteins or MCP) by CheR. Also mediates the irreversible deamidation of specific glutamine residues to glutamic acid. This Cupriavidus metallidurans (strain ATCC 43123 / DSM 2839 / NBRC 102507 / CH34) (Ralstonia metallidurans) protein is Protein-glutamate methylesterase/protein-glutamine glutaminase 2.